The following is a 346-amino-acid chain: Glycosyltransferase 1 domain-containing protein 1 (346 aa).

Positions 1-16 (MRLLFLAVLRPHTGNA) are cleaved as a signal peptide.

The protein belongs to the glycosyltransferase group 1 family. Glycosyltransferase 4 subfamily.

The protein resides in the secreted. In Homo sapiens (Human), this protein is Glycosyltransferase 1 domain-containing protein 1 (GLT1D1).